The chain runs to 396 residues: Metacaspase-1 (396 aa).

Over residues 1–20 (MSGYPGQGYQGQGYGQGYGQ) the composition is skewed to gly residues. Residues 1 to 86 (MSGYPGQGYQ…PQGMQQFGHG (86 aa)) form a disordered region. Over residues 47-62 (HYQYGPPQGGYQYPPQ) the composition is skewed to low complexity. A compositionally biased stretch (polar residues) spans 72–81 (QAHQPPQGMQ). Active-site residues include H186 and C242.

Belongs to the peptidase C14B family.

In terms of biological role, involved in cell death (apoptosis). In Pyricularia oryzae (strain 70-15 / ATCC MYA-4617 / FGSC 8958) (Rice blast fungus), this protein is Metacaspase-1 (MCA1).